Here is a 313-residue protein sequence, read N- to C-terminus: L-lactate dehydrogenase (313 aa).

NAD(+) is bound by residues Val11, Asp32, Arg37, Tyr62, and 76–77; that span reads GV. Substrate is bound by residues Gln79, Arg85, and 117 to 120; that span reads NPVD. NAD(+)-binding positions include 115-117 and Ser143; that span reads ASN. Residue 148-151 participates in substrate binding; sequence DTAR. Positions 153 and 168 each coordinate beta-D-fructose 1,6-bisphosphate. His175 serves as the catalytic Proton acceptor. At Tyr221 the chain carries Phosphotyrosine. Position 230 (Thr230) interacts with substrate.

It belongs to the LDH/MDH superfamily. LDH family. As to quaternary structure, homotetramer.

The protein resides in the cytoplasm. It carries out the reaction (S)-lactate + NAD(+) = pyruvate + NADH + H(+). The protein operates within fermentation; pyruvate fermentation to lactate; (S)-lactate from pyruvate: step 1/1. Its activity is regulated as follows. Allosterically activated by fructose 1,6-bisphosphate (FBP). Functionally, catalyzes the conversion of lactate to pyruvate. The protein is L-lactate dehydrogenase of Geotalea daltonii (strain DSM 22248 / JCM 15807 / FRC-32) (Geobacter daltonii).